Here is a 255-residue protein sequence, read N- to C-terminus: tRNA (guanine-N(7)-)-methyltransferase (255 aa).

A disordered region spans residues 1–21 (MMHDDPNEAGLPPHDDAIPDE). Positions 86, 111, 138, and 161 each coordinate S-adenosyl-L-methionine. Asp161 is a catalytic residue. Substrate-binding positions include Lys165, Asp197, and 232–235 (TKFE).

The protein belongs to the class I-like SAM-binding methyltransferase superfamily. TrmB family.

It catalyses the reaction guanosine(46) in tRNA + S-adenosyl-L-methionine = N(7)-methylguanosine(46) in tRNA + S-adenosyl-L-homocysteine. It functions in the pathway tRNA modification; N(7)-methylguanine-tRNA biosynthesis. Functionally, catalyzes the formation of N(7)-methylguanine at position 46 (m7G46) in tRNA. This is tRNA (guanine-N(7)-)-methyltransferase from Burkholderia lata (strain ATCC 17760 / DSM 23089 / LMG 22485 / NCIMB 9086 / R18194 / 383).